The sequence spans 513 residues: 2,3-bisphosphoglycerate-independent phosphoglycerate mutase (513 aa).

Mn(2+) contacts are provided by aspartate 12 and serine 62. Catalysis depends on serine 62, which acts as the Phosphoserine intermediate. Substrate contacts are provided by residues histidine 123, arginine 153 to aspartate 154, arginine 185, arginine 191, arginine 261 to arginine 264, and lysine 335. The Mn(2+) site is built by aspartate 402, histidine 406, aspartate 443, histidine 444, and histidine 462.

It belongs to the BPG-independent phosphoglycerate mutase family. As to quaternary structure, monomer. It depends on Mn(2+) as a cofactor.

It catalyses the reaction (2R)-2-phosphoglycerate = (2R)-3-phosphoglycerate. It participates in carbohydrate degradation; glycolysis; pyruvate from D-glyceraldehyde 3-phosphate: step 3/5. Catalyzes the interconversion of 2-phosphoglycerate and 3-phosphoglycerate. The polypeptide is 2,3-bisphosphoglycerate-independent phosphoglycerate mutase (Thiobacillus denitrificans (strain ATCC 25259 / T1)).